The sequence spans 442 residues: tRNA-2-methylthio-N(6)-dimethylallyladenosine synthase (442 aa).

The region spanning 3–120 (KKLYIETHGC…LPEMIDAARI (118 aa)) is the MTTase N-terminal domain. 6 residues coordinate [4Fe-4S] cluster: cysteine 12, cysteine 49, cysteine 83, cysteine 157, cysteine 161, and cysteine 164. Residues 143 to 375 (RVDGPSAYVS…QHRLNQQGFE (233 aa)) enclose the Radical SAM core domain. Residues 378–442 (RQMVGSIQRI…PHSLRGSLLQ (65 aa)) enclose the TRAM domain.

This sequence belongs to the methylthiotransferase family. MiaB subfamily. In terms of assembly, monomer. The cofactor is [4Fe-4S] cluster.

The protein localises to the cytoplasm. It catalyses the reaction N(6)-dimethylallyladenosine(37) in tRNA + (sulfur carrier)-SH + AH2 + 2 S-adenosyl-L-methionine = 2-methylsulfanyl-N(6)-dimethylallyladenosine(37) in tRNA + (sulfur carrier)-H + 5'-deoxyadenosine + L-methionine + A + S-adenosyl-L-homocysteine + 2 H(+). Catalyzes the methylthiolation of N6-(dimethylallyl)adenosine (i(6)A), leading to the formation of 2-methylthio-N6-(dimethylallyl)adenosine (ms(2)i(6)A) at position 37 in tRNAs that read codons beginning with uridine. This is tRNA-2-methylthio-N(6)-dimethylallyladenosine synthase from Pseudomonas savastanoi pv. phaseolicola (strain 1448A / Race 6) (Pseudomonas syringae pv. phaseolicola (strain 1448A / Race 6)).